We begin with the raw amino-acid sequence, 242 residues long: NAD(P)H-quinone oxidoreductase subunit K (242 aa).

4 residues coordinate [4Fe-4S] cluster: Cys59, Cys60, Cys124, and Cys155.

Belongs to the complex I 20 kDa subunit family. As to quaternary structure, NDH-1 can be composed of about 15 different subunits; different subcomplexes with different compositions have been identified which probably have different functions. [4Fe-4S] cluster is required as a cofactor.

It is found in the cellular thylakoid membrane. It carries out the reaction a plastoquinone + NADH + (n+1) H(+)(in) = a plastoquinol + NAD(+) + n H(+)(out). It catalyses the reaction a plastoquinone + NADPH + (n+1) H(+)(in) = a plastoquinol + NADP(+) + n H(+)(out). NDH-1 shuttles electrons from an unknown electron donor, via FMN and iron-sulfur (Fe-S) centers, to quinones in the respiratory and/or the photosynthetic chain. The immediate electron acceptor for the enzyme in this species is believed to be plastoquinone. Couples the redox reaction to proton translocation, and thus conserves the redox energy in a proton gradient. Cyanobacterial NDH-1 also plays a role in inorganic carbon-concentration. This is NAD(P)H-quinone oxidoreductase subunit K from Synechococcus sp. (strain RCC307).